The following is a 209-amino-acid chain: HTH-type transcriptional repressor BepR (209 aa).

Residues 9-69 form the HTH tetR-type domain; the sequence is AETREAILLA…SIIGRARFPQ (61 aa). The H-T-H motif DNA-binding region spans 32–51; the sequence is TLTEIACYAGVTRGAIYFHF.

Functionally, represses expression of bepDE. The sequence is that of HTH-type transcriptional repressor BepR (bepR) from Brucella suis biovar 1 (strain 1330).